A 1860-amino-acid polypeptide reads, in one-letter code: Collagen alpha-1(XXVII) chain (1860 aa).

An N-terminal signal peptide occupies residues 1 to 41; that stretch reads MGAGSARGARGTAAAAAARGGGFLFSWILVSFACHLASTQG. A propeptide spans 42–624 (N-terminal propeptide); the sequence is APEDVDILQR…AGSTPFPLLM (583 aa). In terms of domain architecture, Laminin G-like spans 71–236; that stretch reads QSGFIFTQRA…NYCTHLRKQC (166 aa). Asn271 carries N-linked (GlcNAc...) asparagine glycosylation. Disordered stretches follow at residues 278 to 608, 625 to 772, and 851 to 1625; these read ALGS…TSSG, GPPG…GSDG, and LKGD…IQLQ. Composition is skewed to polar residues over residues 298–309 and 386–409; these read TKPQRTSPTNPH and HPTQKTAPSSFTKSALPTQKQVPP. Positions 432-445 are enriched in pro residues; it reads MPRPPPPSTRPLPP. 2 stretches are compositionally biased toward low complexity: residues 446–457 and 485–505; these read TTSSSKKPIPTL and TALSSSPAPTPGSTRSTRPPA. Positions 509–518 are enriched in polar residues; that stretch reads PPTSGTSTPR. Low complexity-rich tracts occupy residues 572-588 and 599-608; these read TTRPSPRQPQPSQQTTP and SSSPRPTSSG. Collagen-like domains lie at 625–679, 688–747, 748–807, 808–867, 871–930, 931–990, 1003–1062, 1066–1125, 1126–1185, 1192–1251, 1258–1317, 1318–1378, 1382–1441, 1442–1501, 1502–1561, and 1562–1621; these read GPPG…GDPG, GAKG…PGPV, GDPG…DGNP, GELG…SGDP, GDKG…KGKP, GARG…PGPV, GEPG…RGAK, GPRG…PGTK, GLPG…IGQR, GDSG…QGEK, GAKG…KGIV, GPLG…RGKP, GQPG…EGIA, GPDG…PGQL, GPPG…QGPR, and GPPG…PGGP. Residues 625-1618 are triple-helical region; that stretch reads GPPGPKGDCG…RGRPGPPGPP (994 aa). Over residues 654–669 the composition is skewed to pro residues; that stretch reads RGPPGPYGNPGLPGPP. The segment covering 714 to 734 has biased composition (low complexity); it reads PGPAGHPGEQGQPGPEGSPGA. Composition is skewed to low complexity over residues 911 to 924 and 932 to 944; these read FPGDIGPPGDNGPE and ARGLPGPRGQLGP. Residues 1033–1042 show a composition bias toward gly residues; sequence GMPGGMGTPG. A compositionally biased stretch (pro residues) spans 1043-1053; that stretch reads EPGPQGPPGSR. The segment covering 1130–1142 has biased composition (pro residues); that stretch reads EPGPQGPQGPIGP. Composition is skewed to basic and acidic residues over residues 1202–1220 and 1241–1253; these read LKGDRGDPGPDGEHGEKGQ and PEGKSGKQGEKGR. Composition is skewed to basic and acidic residues over residues 1326 to 1338 and 1350 to 1360; these read KGEKGEQGEDGKA and PVGDRGDRGEP. The segment covering 1449–1458 has biased composition (low complexity); that stretch reads RDGQAGQQGE. Residues 1572–1587 are compositionally biased toward low complexity; it reads IVGPLGILGPSGLPGP. Residues 1603-1620 show a composition bias toward pro residues; the sequence is RGPPGPRGRPGPPGPPGG. A propeptide spans 1622-1860 (C-terminal propeptide); it reads IQLQQDDLGA…RLEVGPACFL (239 aa). In terms of domain architecture, Fibrillar collagen NC1 spans 1660-1860; sequence GEIFKTLHYL…RLEVGPACFL (201 aa). Cystine bridges form between Cys1690/Cys1722, Cys1731/Cys1858, and Cys1767/Cys1811. The Ca(2+) site is built by Asp1708, Asn1710, Cys1713, and Asp1716. N-linked (GlcNAc...) asparagine glycosylation is present at Asn1769.

The protein belongs to the fibrillar collagen family.

The protein localises to the secreted. It is found in the extracellular space. Its subcellular location is the extracellular matrix. Its function is as follows. Plays a role during the calcification of cartilage and the transition of cartilage to bone. The protein is Collagen alpha-1(XXVII) chain (COL27A1) of Homo sapiens (Human).